Reading from the N-terminus, the 390-residue chain is Chorismate synthase 2 (390 aa).

The NADP(+) site is built by Arg-39 and Arg-45. Residues 132–134, 253–254, Gly-298, 313–317, and Arg-339 contribute to the FMN site; these read RSS, NA, and KPIPT.

It belongs to the chorismate synthase family. In terms of assembly, homotetramer. FMNH2 serves as cofactor.

It catalyses the reaction 5-O-(1-carboxyvinyl)-3-phosphoshikimate = chorismate + phosphate. Its pathway is metabolic intermediate biosynthesis; chorismate biosynthesis; chorismate from D-erythrose 4-phosphate and phosphoenolpyruvate: step 7/7. Its function is as follows. Catalyzes the anti-1,4-elimination of the C-3 phosphate and the C-6 proR hydrogen from 5-enolpyruvylshikimate-3-phosphate (EPSP) to yield chorismate, which is the branch point compound that serves as the starting substrate for the three terminal pathways of aromatic amino acid biosynthesis. This reaction introduces a second double bond into the aromatic ring system. The sequence is that of Chorismate synthase 2 from Bacillus cereus (strain ATCC 10987 / NRS 248).